An 808-amino-acid polypeptide reads, in one-letter code: Sucrose synthase isoform 1 (808 aa).

The tract at residues 277 to 754 (MVFNVVILSP…GLKRIQEKYT (478 aa)) is GT-B glycosyltransferase.

Belongs to the glycosyltransferase 1 family. Plant sucrose synthase subfamily. Homotetramer. As to expression, expressed in stems, in roots at different developmental stages, and in flower buds, flowers and maturing seeds, with the highest levels in strong utilization sinks for sucrose such as growing stems and tap root tips.

It catalyses the reaction an NDP-alpha-D-glucose + D-fructose = a ribonucleoside 5'-diphosphate + sucrose + H(+). Fructose acts as a non-competitive inhibitor with an inhibition constant of 17.2 mM. In contrast, glucose inhibits uncompetitively with an inhibition constant of 4.3 mM. Its function is as follows. Sucrose-cleaving enzyme that provides UDP-glucose and fructose for various metabolic pathways. This chain is Sucrose synthase isoform 1, found in Daucus carota (Wild carrot).